Consider the following 224-residue polypeptide: UPF0758 protein Maqu_3564 (224 aa).

In terms of domain architecture, MPN spans 102–224 (PLRSPADTRR…VISLAERGLM (123 aa)). The Zn(2+) site is built by H173, H175, and D186. A JAMM motif motif is present at residues 173 to 186 (HNHPSGVAEPSQAD).

This sequence belongs to the UPF0758 family.

In Marinobacter nauticus (strain ATCC 700491 / DSM 11845 / VT8) (Marinobacter aquaeolei), this protein is UPF0758 protein Maqu_3564.